The sequence spans 309 residues: Uricase-2 isozyme 1 (309 aa).

Residues K18 and T64 each act as charge relay system in the active site. T64, D65, F166, R183, V238, Q239, and N265 together coordinate urate. The active-site Charge relay system is the H267. Positions 307–309 match the Microbody targeting signal motif; sequence SKL.

Belongs to the uricase family. As to quaternary structure, homotetramer. In terms of processing, the N-terminus is blocked. In terms of tissue distribution, expressed predominantly in the uninfected cells of the central tissue of the root nodule.

The protein localises to the peroxisome. The enzyme catalyses urate + O2 + H2O = 5-hydroxyisourate + H2O2. The protein operates within purine metabolism; urate degradation; (S)-allantoin from urate: step 1/3. Its function is as follows. Catalyzes the oxidation of uric acid to 5-hydroxyisourate, which is further processed to form (S)-allantoin. This is Uricase-2 isozyme 1 from Glycine max (Soybean).